We begin with the raw amino-acid sequence, 451 residues long: Tubulin gamma-1 chain (451 aa).

Ser-131 is modified (phosphoserine; by BRSK1). GTP is bound at residue 142–148; sequence AGGTGSG.

The protein belongs to the tubulin family. In terms of assembly, component of the gamma-tubulin ring complex (gTuRC) consisting of TUBGCP2, TUBGCP3, TUBGCP4, TUBGCP5 and TUBGCP6 and gamma-tubulin TUBG1 or TUBG2. TUBGCP2, TUBGCP3, TUBGCP4, TUBGCP5 and TUBGCP6 assemble in a 5:5:2:1:1 stoichiometry; each is associated with a gamma-tubulin, thereby arranging 14 gamma-tubulins in a helical manner. Gamma-tubulin at the first position is blocked by TUBGCP3 at the last position, allowing 13 protafilaments to grow into a microtubule. The gTuRC (via TUBGCP3 and TUBGCP6) interacts with ACTB and MZT1; the interactions form a luminal bridge that stabilizes the initial structure during complex assembly. The gTuRC (via TUBGCP2) interacts with MZT2A/MZT2B and CDK5RAP2 (via CM1 motif); the interactions play a role in gTuRC activation. Interacts with alpha-beta tubulin heterodimers; the interaction allows microtubules to nucleate from the gTuRC. Interacts with B9D2. Interacts with CDK5RAP2; the interaction is leading to centrosomal localization of TUBG1 and CDK5RAP2. Interacts with CIMAP3. Interacts with SAS6 and NUP62 at the centrosome. Interacts with EML3 (phosphorylated at 'Thr-881') and HAUS8. Interacts with DNM2; this interaction may participate in centrosome cohesion. Interacts with CCDC66. Phosphorylation at Ser-131 by BRSK1 regulates centrosome duplication, possibly by mediating relocation of gamma-tubulin and its associated proteins from the cytoplasm to the centrosome.

It localises to the cytoplasm. The protein localises to the cytoskeleton. The protein resides in the microtubule organizing center. It is found in the centrosome. Its subcellular location is the spindle. In terms of biological role, tubulin is the major constituent of microtubules, protein filaments consisting of alpha- and beta-tubulin heterodimers. Gamma-tubulin is a key component of the gamma-tubulin ring complex (gTuRC) which mediates microtubule nucleation. The gTuRC regulates the minus-end nucleation of alpha-beta tubulin heterodimers that grow into microtubule protafilaments, a critical step in centrosome duplication and spindle formation. This Bos taurus (Bovine) protein is Tubulin gamma-1 chain.